The following is a 569-amino-acid chain: Potassium-transporting ATPase potassium-binding subunit (569 aa).

Transmembrane regions (helical) follow at residues 3 to 23, 64 to 84, 133 to 153, 179 to 199, 255 to 275, 281 to 301, 375 to 395, 421 to 441, 497 to 517, and 535 to 555; these read TEILGVALQILLLLVISYPLG, FLKSLLIINVFWFFWGMILLV, FVIMLFQFITAATGMAAMAGI, ILFPMSLIVGFILIIQGTPMG, IVECWSILIIPMALVFALGFY, LGYVIYGVMLFAYLLGVFCNV, FGGVGVGFMNYYAFLIIAVFI, IVSLAHPFVILIFTAISSYVW, LALIISRYLPIVGQVAIAGLL, and VTFGVMTFFVIVIVAALSFFP.

It belongs to the KdpA family. As to quaternary structure, the system is composed of three essential subunits: KdpA, KdpB and KdpC.

Its subcellular location is the cell inner membrane. Part of the high-affinity ATP-driven potassium transport (or Kdp) system, which catalyzes the hydrolysis of ATP coupled with the electrogenic transport of potassium into the cytoplasm. This subunit binds the periplasmic potassium ions and delivers the ions to the membrane domain of KdpB through an intramembrane tunnel. In Parabacteroides distasonis (strain ATCC 8503 / DSM 20701 / CIP 104284 / JCM 5825 / NCTC 11152), this protein is Potassium-transporting ATPase potassium-binding subunit.